A 177-amino-acid chain; its full sequence is Nucleoside triphosphate/diphosphate phosphatase (177 aa).

Arg23 (proton donor) is an active-site residue. 6 residues coordinate Mg(2+): Asn87, Asp103, Asp105, Asp107, Asp120, and Glu123.

The protein belongs to the Ntdp family. Mg(2+) is required as a cofactor.

It catalyses the reaction a ribonucleoside 5'-triphosphate + H2O = a ribonucleoside 5'-diphosphate + phosphate + H(+). The enzyme catalyses a ribonucleoside 5'-diphosphate + H2O = a ribonucleoside 5'-phosphate + phosphate + H(+). Has nucleoside phosphatase activity towards nucleoside triphosphates and nucleoside diphosphates. This chain is Nucleoside triphosphate/diphosphate phosphatase, found in Streptococcus pneumoniae serotype 19F (strain G54).